The following is a 7079-amino-acid chain: Replicase polyprotein 1ab (7079 aa).

A CoV Nsp1 globular domain is found at 12–127 (THVQLSLPVL…YRNVLLRKNG (116 aa)). Residues 148 to 179 (ELGTDPIEDYEQNWNTKHGGGVLRELIRELNG) form the BetaCoV Nsp1 C-terminal domain. Residues 183–456 (TRYVDNNFCG…NEDLMEILNR (274 aa)) enclose the CoV Nsp2 N-terminal domain. Cysteine 200, cysteine 231, histidine 234, histidine 236, cysteine 323, cysteine 326, cysteine 341, cysteine 344, cysteine 370, cysteine 373, histidine 382, and cysteine 416 together coordinate Zn(2+). The interval 200–236 (CIKDLLARAGKSMCTLSEQLDYIESKRGVYCCREHEH) is C2H2. Residues 323–344 (CNHCDEVSWQTCDFLKATCEQC) form a C4 region. The tract at residues 370–416 (CPACQDPEVGPEHSVADYHNHSNIETRLRKGGRTKCFGGCVFAYVGC) is C2HC. In terms of domain architecture, CoV Nsp2 middle spans 458–688 (RVNINIVGDF…LDVLNKALEM (231 aa)). In terms of domain architecture, CoV Nsp2 C-terminal spans 690-818 (IDQVIIAGAK…TNNVFSLKGG (129 aa)). The Ubiquitin-like 1 domain maps to 822-930 (KGVTFGEDTV…MYCSFYPPDE (109 aa)). Macro domains follow at residues 1001–1167 (VNQF…LGYL), 1213–1341 (KFKA…LPSK), and 1349–1476 (ILGT…TSSS). The region spanning 1478–1544 (TSEEHFIETV…LLDKLKSLLS (67 aa)) is the DPUP domain. The Ubiquitin-like 2 domain maps to 1548–1603 (VRTIKVFTTVDNTNLHTQIVDMSMTYGQQFGPTYLDGADVTKIKPHAKHEGKTFFV). One can recognise a Peptidase C16 domain in the interval 1617-1881 (YYHTLDESFL…YTEIQPKLDE (265 aa)). The active-site For PL-PRO activity is the cysteine 1657. Cysteine 1735, cysteine 1738, cysteine 1770, and cysteine 1772 together coordinate Zn(2+). A C4-type zinc finger spans residues 1735–1772 (CKTCGQKSTTLTGVEAVMYMGTLSYEELKTGVTIPCIC). Catalysis depends on for PL-PRO activity residues histidine 1818 and aspartate 1832. One can recognise a Nucleic acid-binding domain in the interval 1894 to 2004 (PIDLVPTQPL…CLWSTKPVET (111 aa)). A G2M domain is found at 2029–2138 (PTSEEVVENP…LGQAAVTTTN (110 aa)). The interval 2098–2377 (LALGLRTLAT…IFFAFCYYVW (280 aa)) is HD1. The chain crosses the membrane as a helical span at residues 2209 to 2229 (LFTIAMWLLLLSICLGSLIYV). Positions 2230–2300 (TAAFGVLLSN…QVTISSYKLD (71 aa)) constitute a 3Ecto domain. Intrachain disulfides connect cysteine 2246–cysteine 2274 and cysteine 2265–cysteine 2271. 2 consecutive transmembrane segments (helical) span residues 2310-2330 (WFLA…SAIM) and 2357-2377 (MAPV…YYVW). The Y1 stretch occupies residues 2378 to 2468 (KSYVHIMDGC…QFKRPINPTD (91 aa)). The CoV Nsp3 Y domain occupies 2378–2746 (KSYVHIMDGC…ITTKISLKGG (369 aa)). Positions 2382, 2387, 2392, 2395, 2428, 2431, 2435, and 2438 each coordinate Zn(2+). The segment at 2382-2395 (HIMDGCTSSTCMMC) is ZF1. The segment at 2428 to 2438 (CKAHNWNCLNC) is ZF2. The interval 2469 to 2563 (QSSYVVDSVA…LLDQALVSDV (95 aa)) is Y2. The coV-Y stretch occupies residues 2469–2746 (QSSYVVDSVA…ITTKISLKGG (278 aa)). Positions 2564-2645 (GDSTEVSVKM…ECLKLSHHSD (82 aa)) are Y3. The interval 2646–2746 (LEVTGDSCNN…ITTKISLKGG (101 aa)) is Y4. Helical transmembrane passes span 2761 to 2781 (LLCV…SLSV), 2998 to 3018 (PGVF…TPLV), 3028 to 3048 (ASVV…YYFM), 3060 to 3080 (VVAA…LAPA), 3083 to 3103 (FLPG…TNDV), 3111 to 3131 (WFAM…VFCI), and 3148 to 3168 (VMFN…TFLL). The HD2 stretch occupies residues 2761–3168 (LLCVLAALFC…EEAALCTFLL (408 aa)). One can recognise a Nsp4C domain in the interval 3148 to 3246 (VMFNGVTFST…QTSITSAVLQ (99 aa)). One can recognise a Peptidase C30 domain in the interval 3247–3552 (SGFRKMAFPS…VRQCSGVTFQ (306 aa)). Active-site for 3CL-PRO activity residues include histidine 3287 and cysteine 3391. 7 consecutive transmembrane segments (helical) span residues 3570-3590 (FLTS…FFVY), 3592-3612 (NAFL…MLLV), 3618-3638 (FLCL…MVYM), 3665-3684 (CVMY…RTVY), 3691-3710 (VWTL…GNSL), 3734-3754 (IMFL…LLFI), and 3762-3782 (IMLV…LFCL). Residues 3570-3782 (FLTSLLILVQ…CCCYFGLFCL (213 aa)) are HD3. The 83-residue stretch at 3843–3925 (SKMSDVKCTS…EMLDNRATLQ (83 aa)) folds into the RdRp Nsp7 cofactor domain. Residues 3926–4123 (AIASEFSSLP…LRANSAVKLQ (198 aa)) form the RdRp Nsp8 cofactor domain. Positions 4124 to 4236 (NNELSPVALR…GSLAATVRLQ (113 aa)) constitute a Nsp9 ssRNA-binding domain. Residues 4237-4375 (AGNATEVPAN…CDQLREPMMQ (139 aa)) enclose the ExoN/MTase coactivator domain. Zn(2+) contacts are provided by cysteine 4310, cysteine 4313, histidine 4319, cysteine 4326, cysteine 4353, cysteine 4356, cysteine 4364, and cysteine 4366. Zinc fingers lie at residues 4310 to 4326 (CLYC…KGFC) and 4353 to 4366 (CTVC…GCSC). In terms of domain architecture, NiRAN spans 4382-4636 (FLNRVCGVSA…AAESHMDADL (255 aa)). Asparagine 4584 and aspartate 4593 together coordinate Mn(2+). The 99-residue stretch at 4641-4739 (IKWDLLKYDF…HNQDVNLHSS (99 aa)) folds into the Nsp12 Interface domain. 5 residues coordinate Zn(2+): histidine 4670, cysteine 4676, cysteine 4681, cysteine 4685, and cysteine 4862. The Nsp12 RNA-dependent RNA polymerase domain maps to 4740–5307 (RLSFKELLVY…AMYTPHTVLQ (568 aa)). The segment at 4742–4956 (SFKELLVYAA…HQKLLKSIAA (215 aa)) is rdRp Fingers N-ter. A rdRp Palm N-ter region spans residues 4957–4995 (TRGATVVIGTSKFYGGWHNMLKTVYSDVETPHLMGWDYP). Residues 4987-5149 (PHLMGWDYPK…CYNSNYAAQG (163 aa)) form the RdRp catalytic domain. The interval 4996–5054 (KCDRAMPNMLRIMASLVLARKHSTCCNLSHRFYRLANECAQVLSEMVMCGGSLYVKPGG) is rdRp Fingers C-ter. Residues histidine 5017, cysteine 5020, and cysteine 5021 each contribute to the Zn(2+) site. Positions 5055-5190 (TSSGDATTAY…TKGPHEFCSQ (136 aa)) are rdRp Palm C-ter. Catalysis depends on residues serine 5134, aspartate 5135, and aspartate 5136. Residues 5191-5307 (HTMLVKQGDD…AMYTPHTVLQ (117 aa)) form a rdRp Thumb region. Positions 5308 to 5420 (AVGACVLCNS…TDFNAIATCD (113 aa)) constitute a CV ZBD domain. Zn(2+) contacts are provided by cysteine 5312, cysteine 5315, cysteine 5323, cysteine 5326, cysteine 5333, cysteine 5336, histidine 5340, histidine 5346, cysteine 5357, cysteine 5362, cysteine 5379, and histidine 5382. Residues 5564 to 5745 (NISDEFSSNV…MKTIGPDMFL (182 aa)) enclose the (+)RNA virus helicase ATP-binding domain. 5589–5596 (GPPGTGKS) provides a ligand contact to ATP. Positions 5746–5915 (GTCRRCPAEI…TLQAENVTGL (170 aa)) constitute a (+)RNA virus helicase C-terminal domain. Positions 5980–6195 (MFITREEAIR…RCLAVHECFV (216 aa)) constitute an ExoN domain. Catalysis depends on residues aspartate 5998, glutamate 6000, and glutamate 6099. 7 residues coordinate Zn(2+): cysteine 6115, cysteine 6118, cysteine 6134, histidine 6137, histidine 6165, cysteine 6169, and histidine 6172. Residues histidine 6176 and aspartate 6181 contribute to the active site. Cysteine 6187 is a Zn(2+) binding site. The region spanning 6204 to 6435 (YPIIGDELKI…NLWNTFTRLQ (232 aa)) is the N7-MTase domain. S-adenosyl-L-methionine is bound at residue 6239-6245 (DIGNPKA). The gpppA-binding stretch occupies residues 6322–6336 (CDGGSLYVNKHAFHT). 4 residues coordinate Zn(2+): cysteine 6360, cysteine 6381, cysteine 6392, and histidine 6395. Residues 6436–6496 (SLENVAYNVV…NVAFELWAKR (61 aa)) enclose the Nsp15 N-terminal oligomerization domain. One can recognise an AV-Nsp11N/CoV-Nsp15M domain in the interval 6497-6622 (NIKPVPEIKI…YFKKVDGIIQ (126 aa)). The NendoU domain maps to 6639–6778 (KPRSKMETDF…KDGHVETFYP (140 aa)). Residues histidine 6669, histidine 6684, lysine 6724, lysine 6827, aspartate 6911, lysine 6951, and glutamate 6984 contribute to the active site. The Nidovirus-type SAM-dependent 2'-O-MTase domain occupies 6783-7077 (SQAWQPGVAM…RVVVSSDILV (295 aa)).

Belongs to the coronaviruses polyprotein 1ab family. Interacts with host PHB and PHB2. As to quaternary structure, interacts with papain-like protease nsp3 and non-structural protein 6. In terms of assembly, monomer. Homodimer. Only the homodimer shows catalytic activity. Interacts with nsp8 and nsp12 to form the replication-transcription complex (RTC): nsp12, nsp7, two subunits of nsp8, and up to two subunits of nsp13. As to quaternary structure, interacts with nsp7, nsp13 and nsp12 to form the replication-transcription complex (RTC): nsp12, nsp7, two subunits of nsp8, and up to two subunits of nsp13. In terms of assembly, interacts with nsp12. Interacts with proofreading exoribonuclease nsp14 and 2'-O-methyltransferase nsp16; these interactions enhance nsp14 and nsp16 enzymatic activities. As to quaternary structure, interacts with nsp7 and nsp8 to form the replication-transcription complex (RTC): nsp12, nsp7, two subunits of nsp8, and up to two subunits of nsp13. Interacts with nsp9. In terms of assembly, interacts with nsp8 to form the replication-transcription complex (RTC): nsp12, nsp7, two subunits of nsp8, and up to two subunits of nsp13. Mn(2+) is required as a cofactor. Mg(2+) serves as cofactor. In terms of processing, specific enzymatic cleavages in vivo by its own proteases yield mature proteins. 3CL-PRO and PL-PRO proteinases are autocatalytically processed.

Its subcellular location is the host membrane. It is found in the host cytoplasm. It localises to the host perinuclear region. The protein resides in the host endoplasmic reticulum-Golgi intermediate compartment. It catalyses the reaction RNA(n) + a ribonucleoside 5'-triphosphate = RNA(n+1) + diphosphate. The enzyme catalyses ATP + H2O = ADP + phosphate + H(+). It carries out the reaction Thiol-dependent hydrolysis of ester, thioester, amide, peptide and isopeptide bonds formed by the C-terminal Gly of ubiquitin (a 76-residue protein attached to proteins as an intracellular targeting signal).. The catalysed reaction is a 5'-end (N(7)-methyl 5'-triphosphoguanosine)-ribonucleoside in mRNA + S-adenosyl-L-methionine = a 5'-end (N(7)-methyl 5'-triphosphoguanosine)-(2'-O-methyl-ribonucleoside) in mRNA + S-adenosyl-L-homocysteine + H(+). It catalyses the reaction uridylyl-uridylyl-ribonucleotide-RNA = a 3'-end uridylyl-2',3'-cyclophospho-uridine-RNA + a 5'-end dephospho-ribonucleoside-RNA. The enzyme catalyses a 5'-end diphospho-ribonucleoside in mRNA + GTP + H(+) = a 5'-end (5'-triphosphoguanosine)-ribonucleoside in mRNA + diphosphate. It carries out the reaction a 5'-end (5'-triphosphoguanosine)-ribonucleoside in mRNA + S-adenosyl-L-methionine = a 5'-end (N(7)-methyl 5'-triphosphoguanosine)-ribonucleoside in mRNA + S-adenosyl-L-homocysteine. The replicase polyprotein of coronaviruses is a multifunctional protein: it contains the activities necessary for the transcription of negative stranded RNA, leader RNA, subgenomic mRNAs and progeny virion RNA as well as proteinases responsible for the cleavage of the polyprotein into functional products. Its function is as follows. Inhibits host translation by interacting with the 40S ribosomal subunit. The nsp1-40S ribosome complex further induces an endonucleolytic cleavage near the 5'UTR of host mRNAs, targeting them for degradation. Viral mRNAs are not susceptible to nsp1-mediated endonucleolytic RNA cleavage thanks to the presence of a 5'-end leader sequence and are therefore protected from degradation. By suppressing host gene expression, nsp1 facilitates efficient viral gene expression in infected cells and evasion from host immune response. Functionally, may play a role in the modulation of host cell survival signaling pathway by interacting with host PHB and PHB2. Indeed, these two proteins play a role in maintaining the functional integrity of the mitochondria and protecting cells from various stresses. In terms of biological role, responsible for the cleavages located at the N-terminus of the replicase polyprotein. In addition, PL-PRO possesses a deubiquitinating/deISGylating activity and processes both 'Lys-48'- and 'Lys-63'-linked polyubiquitin chains from cellular substrates. Participates together with nsp4 in the assembly of virally-induced cytoplasmic double-membrane vesicles necessary for viral replication. Antagonizes innate immune induction of type I interferon by blocking the phosphorylation, dimerization and subsequent nuclear translocation of host IRF3. Also prevents host NF-kappa-B signaling. Participates in the assembly of virally-induced cytoplasmic double-membrane vesicles necessary for viral replication. Its function is as follows. Cleaves the C-terminus of replicase polyprotein at 11 sites. Recognizes substrates containing the core sequence [ILMVF]-Q-|-[SGACN]. Also able to bind an ADP-ribose-1''-phosphate (ADRP). Functionally, plays a role in the initial induction of autophagosomes from host endoplasmic reticulum. Later, limits the expansion of these phagosomes that are no longer able to deliver viral components to lysosomes. In terms of biological role, forms a hexadecamer with nsp8 (8 subunits of each) that may participate in viral replication by acting as a primase. Alternatively, may synthesize substantially longer products than oligonucleotide primers. Forms a hexadecamer with nsp7 (8 subunits of each) that may participate in viral replication by acting as a primase. Alternatively, may synthesize substantially longer products than oligonucleotide primers. Its function is as follows. Forms a primer, NSP9-pU, which is utilized by the polymerase for the initiation of RNA chains. Interacts with ribosome signal recognition particle RNA (SRP). Together with NSP8, suppress protein integration into the cell membrane, thereby disrupting host immune defenses. Functionally, plays a pivotal role in viral transcription by stimulating both nsp14 3'-5' exoribonuclease and nsp16 2'-O-methyltransferase activities. Therefore plays an essential role in viral mRNAs cap methylation. In terms of biological role, RNA-directed RNA polymerase that catalyzes the transcription of viral genomic and subgenomic RNAs. Acts in complex with nsp7 and nsp8 to transcribe both the minus and positive strands of genomic RNA. The kinase-like NiRAN domain of NSP12 attaches one or more nucleotides to the amino terminus of NSP9, forming a covalent RNA-protein intermediate that serves as transcription/replication primer. Subgenomic RNAs (sgRNAs) are formed by discontinuous transcription: The polymerase has the ability to pause at transcription-regulating sequences (TRS) and jump to the leader TRS, resulting in a major deletion. This creates a series of subgenomic RNAs that are replicated, transcribed and translated. In addition, Nsp12 is a subunit of the viral RNA capping enzyme that catalyzes the RNA guanylyltransferase reaction for genomic and sub-genomic RNAs. Subsequently, the NiRAN domain transfers RNA to GDP, and forms the core cap structure GpppA-RNA. Multi-functional protein with a zinc-binding domain in N-terminus displaying RNA and DNA duplex-unwinding activities with 5' to 3' polarity. Activity of helicase is dependent on magnesium. Its function is as follows. Plays a role in viral RNA synthesis through two distinct activities. The N7-guanine methyltransferase activity plays a role in the formation of the cap structure GpppA-RNA. The proofreading exoribonuclease reduces the sensitivity of the virus to RNA mutagens during replication. This activity acts on both ssRNA and dsRNA in a 3'-5' direction. Functionally, plays a role in viral transcription/replication and prevents the simultaneous activation of host cell dsRNA sensors, such as MDA5/IFIH1, OAS, and PKR. Acts by degrading the 5'-polyuridines generated during replication of the poly(A) region of viral genomic and subgenomic RNAs. Catalyzes a two-step reaction in which a 2'3'-cyclic phosphate (2'3'-cP) is first generated by 2'-O transesterification, which is then hydrolyzed to a 3'-phosphate (3'-P). If not degraded, poly(U) RNA would hybridize with poly(A) RNA tails and activate host dsRNA sensors. In terms of biological role, methyltransferase that mediates mRNA cap 2'-O-ribose methylation to the 5'-cap structure of viral mRNAs. N7-methyl guanosine cap is a prerequisite for binding of nsp16. Therefore plays an essential role in viral mRNAs cap methylation which is essential to evade immune system. The polypeptide is Replicase polyprotein 1ab (rep) (Bat coronavirus 279/2005 (BtCoV)).